Reading from the N-terminus, the 258-residue chain is Tryptophan synthase alpha chain (258 aa).

Residues Glu47 and Asp58 each act as proton acceptor in the active site.

It belongs to the TrpA family. As to quaternary structure, tetramer of two alpha and two beta chains.

The enzyme catalyses (1S,2R)-1-C-(indol-3-yl)glycerol 3-phosphate + L-serine = D-glyceraldehyde 3-phosphate + L-tryptophan + H2O. It functions in the pathway amino-acid biosynthesis; L-tryptophan biosynthesis; L-tryptophan from chorismate: step 5/5. In terms of biological role, the alpha subunit is responsible for the aldol cleavage of indoleglycerol phosphate to indole and glyceraldehyde 3-phosphate. This Bacillus cereus (strain AH820) protein is Tryptophan synthase alpha chain.